The chain runs to 448 residues: Tubulin beta-2 chain (448 aa).

GTP is bound by residues glutamine 11, glutamate 69, serine 138, glycine 142, threonine 143, glycine 144, asparagine 204, and asparagine 226. Position 69 (glutamate 69) interacts with Mg(2+). The disordered stretch occupies residues threonine 429–alanine 448.

It belongs to the tubulin family. Dimer of alpha and beta chains. A typical microtubule is a hollow water-filled tube with an outer diameter of 25 nm and an inner diameter of 15 nM. Alpha-beta heterodimers associate head-to-tail to form protofilaments running lengthwise along the microtubule wall with the beta-tubulin subunit facing the microtubule plus end conferring a structural polarity. Microtubules usually have 13 protofilaments but different protofilament numbers can be found in some organisms and specialized cells. Requires Mg(2+) as cofactor.

Its subcellular location is the cytoplasm. It localises to the cytoskeleton. Functionally, tubulin is the major constituent of microtubules, a cylinder consisting of laterally associated linear protofilaments composed of alpha- and beta-tubulin heterodimers. Microtubules grow by the addition of GTP-tubulin dimers to the microtubule end, where a stabilizing cap forms. Below the cap, tubulin dimers are in GDP-bound state, owing to GTPase activity of alpha-tubulin. In Lupinus albus (White lupine), this protein is Tubulin beta-2 chain (TUBB2).